We begin with the raw amino-acid sequence, 274 residues long: tRNA pseudouridine synthase A (274 aa).

The active-site Nucleophile is Asp-51. Tyr-109 is a binding site for substrate.

This sequence belongs to the tRNA pseudouridine synthase TruA family. Homodimer.

It catalyses the reaction uridine(38/39/40) in tRNA = pseudouridine(38/39/40) in tRNA. Functionally, formation of pseudouridine at positions 38, 39 and 40 in the anticodon stem and loop of transfer RNAs. The protein is tRNA pseudouridine synthase A of Acidovorax ebreus (strain TPSY) (Diaphorobacter sp. (strain TPSY)).